We begin with the raw amino-acid sequence, 144 residues long: 3-dehydroquinate dehydratase (144 aa).

The active-site Proton acceptor is the tyrosine 24. Residues asparagine 76, histidine 82, and aspartate 89 each coordinate substrate. The Proton donor role is filled by histidine 102. Substrate contacts are provided by residues 103-104 (LS) and arginine 113.

Belongs to the type-II 3-dehydroquinase family. Homododecamer.

The catalysed reaction is 3-dehydroquinate = 3-dehydroshikimate + H2O. Its pathway is metabolic intermediate biosynthesis; chorismate biosynthesis; chorismate from D-erythrose 4-phosphate and phosphoenolpyruvate: step 3/7. In terms of biological role, catalyzes a trans-dehydration via an enolate intermediate. The polypeptide is 3-dehydroquinate dehydratase (Nitrosomonas europaea (strain ATCC 19718 / CIP 103999 / KCTC 2705 / NBRC 14298)).